The primary structure comprises 748 residues: Polyribonucleotide nucleotidyltransferase (748 aa).

Asp487 and Asp493 together coordinate Mg(2+). Residues 554-613 (PSTTTIKIDKDKIRDIIGPGGKVIKEICETSGAKIDISDDGTVSVYASDRDKLKVALDKI) form the KH domain. An S1 motif domain is found at 623–691 (GEIFNGTVVK…NKGKAKLTIK (69 aa)). The tract at residues 691–748 (KNADKDKSSNNTKPKTNVNNTKDNSEPEQRRDSSKKRAWNEDNNAETAEVITERKYFN) is disordered. The span at 699-712 (SNNTKPKTNVNNTK) shows a compositional bias: low complexity. Residues 713–722 (DNSEPEQRRD) show a composition bias toward basic and acidic residues.

This sequence belongs to the polyribonucleotide nucleotidyltransferase family. Requires Mg(2+) as cofactor.

Its subcellular location is the cytoplasm. It catalyses the reaction RNA(n+1) + phosphate = RNA(n) + a ribonucleoside 5'-diphosphate. In terms of biological role, involved in mRNA degradation. Catalyzes the phosphorolysis of single-stranded polyribonucleotides processively in the 3'- to 5'-direction. This chain is Polyribonucleotide nucleotidyltransferase, found in Rickettsia africae (strain ESF-5).